A 233-amino-acid polypeptide reads, in one-letter code: Homeobox protein not2 (233 aa).

A DNA-binding region (homeobox) is located at residues 135 to 194 (LKRIRTVFTPEQLERLEKEFLKQQYMVGTERVDLASTLNLTETQVKVWFQNRRIKWRKQS). The segment at 212 to 233 (SSDHTDDSRETEEEEDDVDVEL) is disordered. Over residues 220–233 (RETEEEEDDVDVEL) the composition is skewed to acidic residues.

Localized to the dorsal lip of the blastopore (Spemann organizer) during early gastrulation, after which expression continues in tissues derived from the organizer. Expressed in the notochord during mid-gastrulation, the chordoneural hinge, notochord and ventral spinal cord of the tailbud at stage 22, and finally the tip of the tail in the tadpole (stage 35).

It is found in the nucleus. Functionally, transcriptional repressor. Plays a fundamental role in notochord formation, acting within the mesodermal region. Acts downstream of gsc and upstream of chrd and foxa4-A/pintallavis. The chain is Homeobox protein not2 from Xenopus laevis (African clawed frog).